The sequence spans 346 residues: Peroxidase 9 (346 aa).

Positions 1–23 (MAISKLIPTLVLFVLFSFDVSVA) are cleaved as a signal peptide. Disulfide bonds link Cys54/Cys134, Cys87/Cys92, Cys140/Cys342, and Cys219/Cys251. Residue His85 is the Proton acceptor of the active site. Residues Asp86, Val89, Gly91, Asp93, and Ser95 each contribute to the Ca(2+) site. A substrate-binding site is contributed by Pro182. An N-linked (GlcNAc...) asparagine glycan is attached at Asn185. A heme b-binding site is contributed by His212. Residue Thr213 participates in Ca(2+) binding. Ca(2+) contacts are provided by Asp264, Ser267, and Asp272.

The protein belongs to the peroxidase family. Classical plant (class III) peroxidase subfamily. Requires heme b as cofactor. Ca(2+) is required as a cofactor.

It is found in the secreted. The catalysed reaction is 2 a phenolic donor + H2O2 = 2 a phenolic radical donor + 2 H2O. Its function is as follows. Removal of H(2)O(2), oxidation of toxic reductants, biosynthesis and degradation of lignin, suberization, auxin catabolism, response to environmental stresses such as wounding, pathogen attack and oxidative stress. These functions might be dependent on each isozyme/isoform in each plant tissue. This is Peroxidase 9 (PER9) from Arabidopsis thaliana (Mouse-ear cress).